The following is a 347-amino-acid chain: Phenylalanine--tRNA ligase alpha subunit (347 aa).

Position 265 (E265) interacts with Mg(2+).

It belongs to the class-II aminoacyl-tRNA synthetase family. Phe-tRNA synthetase alpha subunit type 1 subfamily. Tetramer of two alpha and two beta subunits. Requires Mg(2+) as cofactor.

It is found in the cytoplasm. The enzyme catalyses tRNA(Phe) + L-phenylalanine + ATP = L-phenylalanyl-tRNA(Phe) + AMP + diphosphate + H(+). This chain is Phenylalanine--tRNA ligase alpha subunit, found in Wolbachia pipientis subsp. Culex pipiens (strain wPip).